The primary structure comprises 108 residues: Tetrahydromethanopterin S-methyltransferase subunit B (108 aa).

The helical transmembrane segment at glycine 79–valine 99 threads the bilayer.

Belongs to the MtrB family. In terms of assembly, the complex is composed of 8 subunits; MtrA, MtrB, MtrC, MtrD, MtrE, MtrF, MtrG and MtrH.

Its subcellular location is the cell membrane. It catalyses the reaction 5-methyl-5,6,7,8-tetrahydromethanopterin + coenzyme M + 2 Na(+)(in) = 5,6,7,8-tetrahydromethanopterin + methyl-coenzyme M + 2 Na(+)(out). It participates in one-carbon metabolism; methanogenesis from CO(2); methyl-coenzyme M from 5,10-methylene-5,6,7,8-tetrahydromethanopterin: step 2/2. Its function is as follows. Part of a complex that catalyzes the formation of methyl-coenzyme M and tetrahydromethanopterin from coenzyme M and methyl-tetrahydromethanopterin. This is an energy-conserving, sodium-ion translocating step. The protein is Tetrahydromethanopterin S-methyltransferase subunit B of Methanococcus maripaludis (strain C5 / ATCC BAA-1333).